We begin with the raw amino-acid sequence, 338 residues long: Phenylalanine--tRNA ligase alpha subunit (338 aa).

Residue E252 participates in Mg(2+) binding.

Belongs to the class-II aminoacyl-tRNA synthetase family. Phe-tRNA synthetase alpha subunit type 1 subfamily. Tetramer of two alpha and two beta subunits. Mg(2+) serves as cofactor.

It localises to the cytoplasm. The enzyme catalyses tRNA(Phe) + L-phenylalanine + ATP = L-phenylalanyl-tRNA(Phe) + AMP + diphosphate + H(+). The polypeptide is Phenylalanine--tRNA ligase alpha subunit (Pseudomonas entomophila (strain L48)).